Consider the following 376-residue polypeptide: Cytochrome-c peroxidase IdrP1 (376 aa).

The signal sequence occupies residues 1–24 (MGHIRSIRLALAVAAVCTAASAAA). 2 Cytochrome c domains span residues 49–157 (DKVA…AAFK) and 203–354 (AEAQ…EALS). The heme c site is built by Cys71, Cys74, His75, Cys218, Cys221, and His222.

As to quaternary structure, the iodate reductase (Idr) complex is composed of a molybdopterin-dependent iodate reductase (IdrA and IdrB subunits) and two associated peroxidases (IdrP1 and IdrP2). Heme c serves as cofactor.

It is found in the periplasm. The enzyme catalyses 2 Fe(II)-[cytochrome c] + H2O2 + 2 H(+) = 2 Fe(III)-[cytochrome c] + 2 H2O. Functionally, involved in iodate respiration. May play a critical role in detoxification of inadvertent H(2)O(2) generated by the iodate reductase IdrA/IdrB. The protein is Cytochrome-c peroxidase IdrP1 of Denitromonas iodatirespirans.